The primary structure comprises 933 residues: 2-oxoglutarate dehydrogenase E1 component (933 aa).

This sequence belongs to the alpha-ketoglutarate dehydrogenase family. Homodimer. Part of the 2-oxoglutarate dehydrogenase (OGDH) complex composed of E1 (2-oxoglutarate dehydrogenase), E2 (dihydrolipoamide succinyltransferase) and E3 (dihydrolipoamide dehydrogenase); the complex contains multiple copies of the three enzymatic components (E1, E2 and E3). It depends on thiamine diphosphate as a cofactor.

The enzyme catalyses N(6)-[(R)-lipoyl]-L-lysyl-[protein] + 2-oxoglutarate + H(+) = N(6)-[(R)-S(8)-succinyldihydrolipoyl]-L-lysyl-[protein] + CO2. In terms of biological role, E1 component of the 2-oxoglutarate dehydrogenase (OGDH) complex which catalyzes the decarboxylation of 2-oxoglutarate, the first step in the conversion of 2-oxoglutarate to succinyl-CoA and CO(2). The sequence is that of 2-oxoglutarate dehydrogenase E1 component from Staphylococcus saprophyticus subsp. saprophyticus (strain ATCC 15305 / DSM 20229 / NCIMB 8711 / NCTC 7292 / S-41).